Reading from the N-terminus, the 164-residue chain is MAEVANNEQQEQAPQFNIQRIYTKDLSFETPNSPAVFQKEWNPEVKLDLDTRSNKLSDDVYEVVLSLTVTAKNGEETAFLCEVQQAGIFSIQGLTEQQLAHSLGAYCPNVLFPYARELVGSLVGRGTFPQLNLAPVNFDALFAQYVQQRQAAAAEAPAVEEANA.

It belongs to the SecB family. Homotetramer, a dimer of dimers. One homotetramer interacts with 1 SecA dimer.

The protein localises to the cytoplasm. One of the proteins required for the normal export of preproteins out of the cell cytoplasm. It is a molecular chaperone that binds to a subset of precursor proteins, maintaining them in a translocation-competent state. It also specifically binds to its receptor SecA. This Shewanella denitrificans (strain OS217 / ATCC BAA-1090 / DSM 15013) protein is Protein-export protein SecB.